Consider the following 564-residue polypeptide: DNA ligase B (564 aa).

The active-site N6-AMP-lysine intermediate is K130.

Belongs to the NAD-dependent DNA ligase family. LigB subfamily.

It catalyses the reaction NAD(+) + (deoxyribonucleotide)n-3'-hydroxyl + 5'-phospho-(deoxyribonucleotide)m = (deoxyribonucleotide)n+m + AMP + beta-nicotinamide D-nucleotide.. Catalyzes the formation of phosphodiester linkages between 5'-phosphoryl and 3'-hydroxyl groups in double-stranded DNA using NAD as a coenzyme and as the energy source for the reaction. This chain is DNA ligase B, found in Klebsiella pneumoniae subsp. pneumoniae (strain ATCC 700721 / MGH 78578).